A 227-amino-acid chain; its full sequence is Cytochrome c oxidase subunit 2 (227 aa).

The Mitochondrial intermembrane segment spans residues 1–14 (MAYPFQLGLQDATS). The helical transmembrane segment at 15-45 (PIMEELLHFHDHTLMIVFLISSLVLYIISLM) threads the bilayer. At 46–59 (LTTKLTHTSTMDAQ) the chain is on the mitochondrial matrix side. The helical transmembrane segment at 60 to 87 (EVETVWTILPAIILILIALLSLRILYMM) threads the bilayer. The Mitochondrial intermembrane portion of the chain corresponds to 88–227 (DEINNPFLTM…YFETWSALMV (140 aa)). His161, Cys196, Glu198, Cys200, His204, and Met207 together coordinate Cu cation. Glu198 serves as a coordination point for Mg(2+). Tyr218 carries the phosphotyrosine modification.

This sequence belongs to the cytochrome c oxidase subunit 2 family. As to quaternary structure, component of the cytochrome c oxidase (complex IV, CIV), a multisubunit enzyme composed of 14 subunits. The complex is composed of a catalytic core of 3 subunits MT-CO1, MT-CO2 and MT-CO3, encoded in the mitochondrial DNA, and 11 supernumerary subunits COX4I, COX5A, COX5B, COX6A, COX6B, COX6C, COX7A, COX7B, COX7C, COX8 and NDUFA4, which are encoded in the nuclear genome. The complex exists as a monomer or a dimer and forms supercomplexes (SCs) in the inner mitochondrial membrane with NADH-ubiquinone oxidoreductase (complex I, CI) and ubiquinol-cytochrome c oxidoreductase (cytochrome b-c1 complex, complex III, CIII), resulting in different assemblies (supercomplex SCI(1)III(2)IV(1) and megacomplex MCI(2)III(2)IV(2)). Found in a complex with TMEM177, COA6, COX18, COX20, SCO1 and SCO2. Interacts with TMEM177 in a COX20-dependent manner. Interacts with COX20. Interacts with COX16. Requires Cu cation as cofactor.

Its subcellular location is the mitochondrion inner membrane. It carries out the reaction 4 Fe(II)-[cytochrome c] + O2 + 8 H(+)(in) = 4 Fe(III)-[cytochrome c] + 2 H2O + 4 H(+)(out). In terms of biological role, component of the cytochrome c oxidase, the last enzyme in the mitochondrial electron transport chain which drives oxidative phosphorylation. The respiratory chain contains 3 multisubunit complexes succinate dehydrogenase (complex II, CII), ubiquinol-cytochrome c oxidoreductase (cytochrome b-c1 complex, complex III, CIII) and cytochrome c oxidase (complex IV, CIV), that cooperate to transfer electrons derived from NADH and succinate to molecular oxygen, creating an electrochemical gradient over the inner membrane that drives transmembrane transport and the ATP synthase. Cytochrome c oxidase is the component of the respiratory chain that catalyzes the reduction of oxygen to water. Electrons originating from reduced cytochrome c in the intermembrane space (IMS) are transferred via the dinuclear copper A center (CU(A)) of subunit 2 and heme A of subunit 1 to the active site in subunit 1, a binuclear center (BNC) formed by heme A3 and copper B (CU(B)). The BNC reduces molecular oxygen to 2 water molecules using 4 electrons from cytochrome c in the IMS and 4 protons from the mitochondrial matrix. The sequence is that of Cytochrome c oxidase subunit 2 (MT-CO2) from Nyctereutes procyonoides (Raccoon dog).